Consider the following 489-residue polypeptide: MIEEHGGIVQSDGSIQPIDMSSFEKKSGSKKKEKKLTPKNINLLVQQSNQSVKQQKDAQKKQTSNGFNNNNSSNIHDGGMGGGSSSDNMDGSLDYSINNILKKEYEKINRNQVSSFSDVENFSEDDEDDDAEDDDSSDDQVNNKKNKPKKPSKLMKHDSVDGKNKMTPISSTSKKKVQHQLKEKNKKKGIKNDKKKSKPTKPTPKSVSSLPPPKIDSSTNNDNGSSDDDNSAKFKKYLFSIEPQKFEHTIEIPPFREINEFYDQDDGYSILSKNKYIGNWRDHNQYKSFDFDEEIDNQLDDNIINNDNDNDNDNDDDNDNDNDNDNDNDNDNDDDENGEDNGEDLNINNNNNNYNNNNNNNNNNNNNNNNNNNNNNNNNNNNNNFTSIQNDLDLQNNLNLSPIIITSSSSSSSSSPIGRNEIKTSLVSESGRSISSPILIPSPTLSSKSNNQENDDPTLVKSNNSFIKSIFSSGKIKRNSLQEYSIRNS.

4 disordered regions span residues Met1–Asp94, Asn109–Asp229, Asp300–Gln389, and Ser428–Lys461. Composition is skewed to low complexity over residues Leu43 to Lys53 and Ser64 to Asp77. Residues Asn121–Asp138 are compositionally biased toward acidic residues. Over residues Lys144–Leu154 the composition is skewed to basic residues. The span at Met155 to Asn164 shows a compositional bias: basic and acidic residues. Residues Ser173–Pro199 show a composition bias toward basic residues. A compositionally biased stretch (acidic residues) spans Asn308–Glu343. Low complexity-rich tracts occupy residues Asp344–Gln389 and Ser433–Ser449.

This is an uncharacterized protein from Dictyostelium discoideum (Social amoeba).